Consider the following 150-residue polypeptide: uncharacterized protein (150 aa).

Positions 1-39 are cleaved as a signal peptide; it reads MKQRFSQVATVIFFVMSIRSPRNLGFFFTLALFVVLVCS.

This is an uncharacterized protein from Saccharomyces cerevisiae (strain ATCC 204508 / S288c) (Baker's yeast).